The chain runs to 287 residues: mRNA-capping enzyme regulatory subunit OPG124 (287 aa).

It belongs to the orthopoxvirus mRNA-capping enzyme regulatory subunit family. Interacts with the catalytic subunit OPG113.

Its subcellular location is the virion. In terms of biological role, regulatory subunit of the mRNA cap enzyme which stabilizes the catalytic subunit and enhances its methyltransferase activity through an allosteric mechanism. Heterodimeric mRNA capping enzyme catalyzes the linkage of a N7-methyl-guanosine moiety to the first transcribed nucleotide (cap 0 structure), whereas the methyltransferase OPG102 is responsible for a second methylation at the 2'-O position of the ribose (cap 1 structure). Also involved in early viral gene transcription termination and intermediate viral gene transcription initiation. Early gene transcription termination requires the termination factor VTF, the DNA-dependent ATPase NPH-I/OPG123 and the RAP94/OPG109 subunit of the viral RNA polymerase, as well as the presence of a specific termination motif. Binds, together with RAP94/OPG109, to the termination motif 5'-UUUUUNU-3' in the nascent early mRNA. The sequence is that of mRNA-capping enzyme regulatory subunit OPG124 (OPG124) from Bos taurus (Bovine).